The primary structure comprises 147 residues: Deoxyuridine 5'-triphosphate nucleotidohydrolase (147 aa).

Residues 63-65 (RSG), Asn76, and 80-82 (TID) contribute to the substrate site.

This sequence belongs to the dUTPase family. Requires Mg(2+) as cofactor.

The enzyme catalyses dUTP + H2O = dUMP + diphosphate + H(+). Its pathway is pyrimidine metabolism; dUMP biosynthesis; dUMP from dCTP (dUTP route): step 2/2. This enzyme is involved in nucleotide metabolism: it produces dUMP, the immediate precursor of thymidine nucleotides and it decreases the intracellular concentration of dUTP so that uracil cannot be incorporated into DNA. The polypeptide is Deoxyuridine 5'-triphosphate nucleotidohydrolase (Chlamydia felis (strain Fe/C-56) (Chlamydophila felis)).